The following is a 495-amino-acid chain: Probable leucine aminopeptidase 2 (495 aa).

The signal sequence occupies residues 1–21 (MKSQLLSLAVAVTTISQGVVG). Positions 130–216 (MAELVVAKNN…SQEDGKNLAT (87 aa)) constitute a PA domain. N-linked (GlcNAc...) asparagine glycans are attached at residues N142 and N235. Residues H259 and D271 each coordinate Zn(2+). An N-linked (GlcNAc...) asparagine glycan is attached at N272. E303 (proton acceptor) is an active-site residue. Zn(2+) contacts are provided by E304 and D332. N-linked (GlcNAc...) asparagine glycosylation occurs at N352. H430 contributes to the Zn(2+) binding site.

This sequence belongs to the peptidase M28 family. M28A subfamily. As to quaternary structure, monomer. Requires Zn(2+) as cofactor.

The protein resides in the secreted. Its function is as follows. Extracellular aminopeptidase that releases a wide variety of amino acids from natural peptides and contributes to pathogenicity. The protein is Probable leucine aminopeptidase 2 (LAP2) of Arthroderma benhamiae (strain ATCC MYA-4681 / CBS 112371) (Trichophyton mentagrophytes).